The chain runs to 507 residues: Cysteine--tRNA ligase (507 aa).

Zn(2+) is bound at residue Cys29. The 'HIGH' region motif lies at 31–41 (PTVYDVPHIGN). Positions 207, 232, and 236 each coordinate Zn(2+). Residues 265–269 (KMSKS) carry the 'KMSKS' region motif. Lys268 is a binding site for ATP.

The protein belongs to the class-I aminoacyl-tRNA synthetase family. As to quaternary structure, monomer. The cofactor is Zn(2+).

Its subcellular location is the cytoplasm. It carries out the reaction tRNA(Cys) + L-cysteine + ATP = L-cysteinyl-tRNA(Cys) + AMP + diphosphate. This chain is Cysteine--tRNA ligase, found in Neorickettsia sennetsu (strain ATCC VR-367 / Miyayama) (Ehrlichia sennetsu).